Here is a 304-residue protein sequence, read N- to C-terminus: Putative S-adenosyl-L-methionine-dependent methyltransferase MSMEG_1482/MSMEI_1446 (304 aa).

Residues aspartate 130 and 159–160 each bind S-adenosyl-L-methionine; that span reads DL.

Belongs to the UPF0677 family.

In terms of biological role, exhibits S-adenosyl-L-methionine-dependent methyltransferase activity. This Mycolicibacterium smegmatis (strain ATCC 700084 / mc(2)155) (Mycobacterium smegmatis) protein is Putative S-adenosyl-L-methionine-dependent methyltransferase MSMEG_1482/MSMEI_1446.